We begin with the raw amino-acid sequence, 244 residues long: ATP synthase subunit a, chloroplastic (244 aa).

A run of 5 helical transmembrane segments spans residues 35-55 (QVLI…AIAV), 92-112 (VPFI…GALL), 131-151 (INTT…AGIT), 196-216 (LVVV…VMFL), and 217-237 (GLFT…AYIG).

The protein belongs to the ATPase A chain family. As to quaternary structure, F-type ATPases have 2 components, CF(1) - the catalytic core - and CF(0) - the membrane proton channel. CF(1) has five subunits: alpha(3), beta(3), gamma(1), delta(1), epsilon(1). CF(0) has four main subunits: a, b, b' and c.

Its subcellular location is the plastid. The protein localises to the chloroplast thylakoid membrane. Its function is as follows. Key component of the proton channel; it plays a direct role in the translocation of protons across the membrane. The sequence is that of ATP synthase subunit a, chloroplastic from Coffea arabica (Arabian coffee).